The sequence spans 280 residues: Ribosomal protein L11 methyltransferase (280 aa).

Residues T131, G152, D174, and N217 each coordinate S-adenosyl-L-methionine.

The protein belongs to the methyltransferase superfamily. PrmA family.

The protein localises to the cytoplasm. It catalyses the reaction L-lysyl-[protein] + 3 S-adenosyl-L-methionine = N(6),N(6),N(6)-trimethyl-L-lysyl-[protein] + 3 S-adenosyl-L-homocysteine + 3 H(+). In terms of biological role, methylates ribosomal protein L11. This is Ribosomal protein L11 methyltransferase from Bacteroides thetaiotaomicron (strain ATCC 29148 / DSM 2079 / JCM 5827 / CCUG 10774 / NCTC 10582 / VPI-5482 / E50).